We begin with the raw amino-acid sequence, 261 residues long: Imidazole glycerol phosphate synthase subunit HisF (261 aa).

Catalysis depends on residues Asp-16 and Asp-135.

The protein belongs to the HisA/HisF family. Heterodimer of HisH and HisF.

Its subcellular location is the cytoplasm. It catalyses the reaction 5-[(5-phospho-1-deoxy-D-ribulos-1-ylimino)methylamino]-1-(5-phospho-beta-D-ribosyl)imidazole-4-carboxamide + L-glutamine = D-erythro-1-(imidazol-4-yl)glycerol 3-phosphate + 5-amino-1-(5-phospho-beta-D-ribosyl)imidazole-4-carboxamide + L-glutamate + H(+). The protein operates within amino-acid biosynthesis; L-histidine biosynthesis; L-histidine from 5-phospho-alpha-D-ribose 1-diphosphate: step 5/9. Functionally, IGPS catalyzes the conversion of PRFAR and glutamine to IGP, AICAR and glutamate. The HisF subunit catalyzes the cyclization activity that produces IGP and AICAR from PRFAR using the ammonia provided by the HisH subunit. The protein is Imidazole glycerol phosphate synthase subunit HisF of Mycolicibacterium smegmatis (strain ATCC 700084 / mc(2)155) (Mycobacterium smegmatis).